Reading from the N-terminus, the 105-residue chain is Tyrosine-protein phosphatase 12 (105 aa).

The region spanning 1-105 is the Tyrosine-protein phosphatase domain; the sequence is WRMIWEKRVE…NLRRIVRTEF (105 aa). A substrate-binding site is contributed by Asp-84.

This sequence belongs to the protein-tyrosine phosphatase family.

It catalyses the reaction O-phospho-L-tyrosyl-[protein] + H2O = L-tyrosyl-[protein] + phosphate. This chain is Tyrosine-protein phosphatase 12 (STY-12), found in Styela plicata (Wrinkled sea squirt).